We begin with the raw amino-acid sequence, 247 residues long: Complement C1q subcomponent subunit A (247 aa).

Residues 1 to 24 form the signal peptide; that stretch reads MEAPRGWLVIMISVLAVSLASSAA. The interval 26–116 is disordered; sequence DTCRDLDGRD…NPGNIKDQRR (91 aa). Residues 27-38 show a composition bias toward basic and acidic residues; it reads TCRDLDGRDGAA. The region spanning 33-111 is the Collagen-like domain; the sequence is GRDGAARKPG…KGIKGNPGNI (79 aa). Proline 41 and proline 47 each carry 4-hydroxyproline. 5-hydroxylysine is present on lysine 50. Lysine 50 carries an O-linked (Gal...) hydroxylysine glycan. 4-hydroxyproline is present on residues proline 56 and proline 59. Position 69 is a 5-hydroxylysine (lysine 69). The O-linked (Gal...) hydroxylysine glycan is linked to lysine 69. 4-hydroxyproline occurs at positions 81 and 87. Residues 98–109 are compositionally biased toward low complexity; the sequence is LPGLKGIKGNPG. Lysine 102 carries the 5-hydroxylysine modification. Lysine 102 is a glycosylation site (O-linked (Gal...) hydroxylysine). The region spanning 112-247 is the C1q domain; it reads KDQRRPAFSA…FSGFLIFPST (136 aa). The cysteines at positions 174 and 192 are disulfide-linked. Glutamine 201 is a binding site for Ca(2+).

As to quaternary structure, core component of the complement C1 complex, a calcium-dependent complex composed of 1 molecule of the C1Q subcomplex, 2 molecules of C1R and 2 molecules of C1S. The C1Q subcomplex is composed 18 subunits: 3 chains of C1QA, C1QB, and C1QC trimerize to form 6 collagen-like triple helices connected to six globular ligand-recognition modules (C1q domain). Interacts with CR1 (via Sushi 24 and Sushi 25 domains). Interacts (via C-terminus) with CD33; this interaction activates CD33 inhibitory motifs. O-linked glycans are assumed to be the Glc-Gal disaccharides typically found as secondary modifications of hydroxylated lysines in collagen-like domains.

It localises to the secreted. Its subcellular location is the cell surface. Its activity is regulated as follows. The C1Q subcomplex is inhibited by sulfated molecules, such as triterpenoid sulfates, heparan sulfate, or chondroitin sulfates. Core component of the complement C1 complex, a multiprotein complex that initiates the classical pathway of the complement system, a cascade of proteins that leads to phagocytosis and breakdown of pathogens and signaling that strengthens the adaptive immune system. The classical complement pathway is initiated by the C1Q subcomplex of the C1 complex, which specifically binds IgG or IgM immunoglobulins complexed with antigens, forming antigen-antibody complexes on the surface of pathogens: C1QA, together with C1QB and C1QC, specifically recognizes and binds the Fc regions of IgG or IgM via its C1q domain. Immunoglobulin-binding activates the proenzyme C1R, which cleaves C1S, initiating the proteolytic cascade of the complement system. The C1Q subcomplex is activated by a hexamer of IgG complexed with antigens, while it is activated by a pentameric IgM. The C1Q subcomplex also recognizes and binds phosphatidylserine exposed on the surface of cells undergoing programmed cell death, possibly promoting activation of the complement system. This Sus scrofa (Pig) protein is Complement C1q subcomponent subunit A (C1QA).